The chain runs to 341 residues: Glycerol-3-phosphate dehydrogenase [NAD(P)+] (341 aa).

Serine 14, phenylalanine 15, arginine 35, and lysine 108 together coordinate NADPH. Lysine 108 and glycine 136 together coordinate sn-glycerol 3-phosphate. An NADPH-binding site is contributed by alanine 140. 5 residues coordinate sn-glycerol 3-phosphate: lysine 191, aspartate 244, serine 254, arginine 255, and asparagine 256. Lysine 191 functions as the Proton acceptor in the catalytic mechanism. NADPH is bound at residue arginine 255. Valine 279 and glutamate 281 together coordinate NADPH.

It belongs to the NAD-dependent glycerol-3-phosphate dehydrogenase family.

It is found in the cytoplasm. It carries out the reaction sn-glycerol 3-phosphate + NAD(+) = dihydroxyacetone phosphate + NADH + H(+). The enzyme catalyses sn-glycerol 3-phosphate + NADP(+) = dihydroxyacetone phosphate + NADPH + H(+). It functions in the pathway membrane lipid metabolism; glycerophospholipid metabolism. In terms of biological role, catalyzes the reduction of the glycolytic intermediate dihydroxyacetone phosphate (DHAP) to sn-glycerol 3-phosphate (G3P), the key precursor for phospholipid synthesis. In Pseudomonas entomophila (strain L48), this protein is Glycerol-3-phosphate dehydrogenase [NAD(P)+].